The following is a 73-amino-acid chain: Cell division protein ZapB (73 aa).

Positions Leu-3–Gly-67 form a coiled coil.

This sequence belongs to the ZapB family. In terms of assembly, homodimer. The ends of the coiled-coil dimer bind to each other, forming polymers. Interacts with FtsZ.

Its subcellular location is the cytoplasm. Functionally, non-essential, abundant cell division factor that is required for proper Z-ring formation. It is recruited early to the divisome by direct interaction with FtsZ, stimulating Z-ring assembly and thereby promoting cell division earlier in the cell cycle. Its recruitment to the Z-ring requires functional FtsA or ZipA. The chain is Cell division protein ZapB from Shewanella sp. (strain ANA-3).